The following is an 839-amino-acid chain: Protein translocase subunit SecA (839 aa).

Residues Q86, 104–108 (GEGKT), and D493 each bind ATP. The disordered stretch occupies residues 794–839 (GIDMDNLQTSGPSDRPDPETSGDADPKNRAQRRAQEQERKRQNKKQ). The segment covering 807-833 (DRPDPETSGDADPKNRAQRRAQEQERK) has biased composition (basic and acidic residues).

It belongs to the SecA family. In terms of assembly, monomer and homodimer. Part of the essential Sec protein translocation apparatus which comprises SecA, SecYEG and auxiliary proteins SecDF. Other proteins may also be involved.

It localises to the cell membrane. The protein localises to the cytoplasm. It catalyses the reaction ATP + H2O + cellular proteinSide 1 = ADP + phosphate + cellular proteinSide 2.. Its function is as follows. Part of the Sec protein translocase complex. Interacts with the SecYEG preprotein conducting channel. Has a central role in coupling the hydrolysis of ATP to the transfer of proteins into and across the cell membrane, serving as an ATP-driven molecular motor driving the stepwise translocation of polypeptide chains across the membrane. The protein is Protein translocase subunit SecA of Brevibacillus brevis (strain 47 / JCM 6285 / NBRC 100599).